Reading from the N-terminus, the 215-residue chain is ATP phosphoribosyltransferase (215 aa).

It belongs to the ATP phosphoribosyltransferase family. Short subfamily. Heteromultimer composed of HisG and HisZ subunits.

The protein resides in the cytoplasm. It catalyses the reaction 1-(5-phospho-beta-D-ribosyl)-ATP + diphosphate = 5-phospho-alpha-D-ribose 1-diphosphate + ATP. It participates in amino-acid biosynthesis; L-histidine biosynthesis; L-histidine from 5-phospho-alpha-D-ribose 1-diphosphate: step 1/9. Catalyzes the condensation of ATP and 5-phosphoribose 1-diphosphate to form N'-(5'-phosphoribosyl)-ATP (PR-ATP). Has a crucial role in the pathway because the rate of histidine biosynthesis seems to be controlled primarily by regulation of HisG enzymatic activity. The polypeptide is ATP phosphoribosyltransferase (Prochlorococcus marinus (strain MIT 9215)).